The sequence spans 384 residues: S-adenosylmethionine synthase (384 aa).

H15 contacts ATP. Mg(2+) is bound at residue D17. Residue E43 participates in K(+) binding. The L-methionine site is built by E56 and Q99. The tract at residues 99 to 109 (QSPDINQGVDR) is flexible loop. ATP contacts are provided by residues 164 to 166 (DAK), 230 to 231 (RF), D239, 245 to 246 (RK), A262, and K266. An L-methionine-binding site is contributed by D239. K270 contacts L-methionine.

Belongs to the AdoMet synthase family. As to quaternary structure, homotetramer; dimer of dimers. It depends on Mg(2+) as a cofactor. Requires K(+) as cofactor.

The protein localises to the cytoplasm. The catalysed reaction is L-methionine + ATP + H2O = S-adenosyl-L-methionine + phosphate + diphosphate. It participates in amino-acid biosynthesis; S-adenosyl-L-methionine biosynthesis; S-adenosyl-L-methionine from L-methionine: step 1/1. Its function is as follows. Catalyzes the formation of S-adenosylmethionine (AdoMet) from methionine and ATP. The overall synthetic reaction is composed of two sequential steps, AdoMet formation and the subsequent tripolyphosphate hydrolysis which occurs prior to release of AdoMet from the enzyme. The polypeptide is S-adenosylmethionine synthase (Cronobacter sakazakii (strain ATCC BAA-894) (Enterobacter sakazakii)).